The primary structure comprises 149 residues: Arginine repressor (149 aa).

Belongs to the ArgR family.

The protein resides in the cytoplasm. The protein operates within amino-acid biosynthesis; L-arginine biosynthesis [regulation]. In terms of biological role, regulates arginine biosynthesis genes. The sequence is that of Arginine repressor from Bacillus cereus (strain ATCC 10987 / NRS 248).